The following is a 58-amino-acid chain: Large ribosomal subunit protein bL32 (58 aa).

The protein belongs to the bacterial ribosomal protein bL32 family.

This is Large ribosomal subunit protein bL32 from Anaplasma phagocytophilum (strain HZ).